Here is a 242-residue protein sequence, read N- to C-terminus: Uridylate kinase (242 aa).

An ATP-binding site is contributed by 16-19 (KVSG). Gly58 lines the UMP pocket. ATP is bound by residues Gly59 and Arg63. UMP is bound by residues Asp78 and 139-146 (TGNPFCTT). ATP contacts are provided by Thr166, Gln167, Tyr172, and Asp175.

The protein belongs to the UMP kinase family. In terms of assembly, homohexamer.

It is found in the cytoplasm. It carries out the reaction UMP + ATP = UDP + ADP. It functions in the pathway pyrimidine metabolism; CTP biosynthesis via de novo pathway; UDP from UMP (UMPK route): step 1/1. Inhibited by UTP. In terms of biological role, catalyzes the reversible phosphorylation of UMP to UDP. This chain is Uridylate kinase, found in Rickettsia prowazekii (strain Madrid E).